Here is a 279-residue protein sequence, read N- to C-terminus: Shikimate dehydrogenase (NADP(+)) (279 aa).

Shikimate-binding positions include 14–16 and T63; that span reads SIS. The Proton acceptor role is filled by K67. NADP(+) is bound at residue E79. Residues N88 and D103 each contribute to the shikimate site. NADP(+)-binding positions include 127–131, 151–156, and M219; these read GAGGA and NRTYEK. Y221 contributes to the shikimate binding site. NADP(+) is bound at residue G242.

The protein belongs to the shikimate dehydrogenase family. As to quaternary structure, homodimer.

The enzyme catalyses shikimate + NADP(+) = 3-dehydroshikimate + NADPH + H(+). The protein operates within metabolic intermediate biosynthesis; chorismate biosynthesis; chorismate from D-erythrose 4-phosphate and phosphoenolpyruvate: step 4/7. Its function is as follows. Involved in the biosynthesis of the chorismate, which leads to the biosynthesis of aromatic amino acids. Catalyzes the reversible NADPH linked reduction of 3-dehydroshikimate (DHSA) to yield shikimate (SA). The protein is Shikimate dehydrogenase (NADP(+)) of Caldicellulosiruptor saccharolyticus (strain ATCC 43494 / DSM 8903 / Tp8T 6331).